The sequence spans 520 residues: TnpB-like protein L770 (520 aa).

The disordered stretch occupies residues 23-44 (KTKKKVFVKKKPPDKKPLKKPV). 4 residues coordinate Zn(2+): Cys-474, Cys-477, Cys-491, and Cys-494.

This sequence in the central section; belongs to the transposase 2 family. The protein in the C-terminal section; belongs to the transposase 35 family.

This chain is TnpB-like protein L770, found in Acanthamoeba polyphaga mimivirus (APMV).